The chain runs to 462 residues: 23S rRNA (uracil(1939)-C(5))-methyltransferase RlmD (462 aa).

In terms of domain architecture, TRAM spans 6–76; that stretch reads KSRKPQQPEY…KRLEEAEMVE (71 aa). Positions 90, 96, 99, and 178 each coordinate [4Fe-4S] cluster. S-adenosyl-L-methionine-binding residues include Gln-287, Phe-316, Asn-321, Glu-340, Asp-367, and Asp-388. The active-site Nucleophile is the Cys-414.

The protein belongs to the class I-like SAM-binding methyltransferase superfamily. RNA M5U methyltransferase family. RlmD subfamily.

The catalysed reaction is uridine(1939) in 23S rRNA + S-adenosyl-L-methionine = 5-methyluridine(1939) in 23S rRNA + S-adenosyl-L-homocysteine + H(+). Functionally, catalyzes the formation of 5-methyl-uridine at position 1939 (m5U1939) in 23S rRNA. The sequence is that of 23S rRNA (uracil(1939)-C(5))-methyltransferase RlmD from Acinetobacter baumannii (strain AB0057).